Here is a 353-residue protein sequence, read N- to C-terminus: MNGTEGPYFYVPMVNTSGIVRSPYEYPQYYLVNPAAYAALGAYMFLLILVGFPINFLTLYVTIEHKKLRTPLNYILLNLAVADLFMVFGGFTTTMYTSMHGYFVLGRLGCNIEGFFATLGGEIALWSLVVLAIERWVVVCKPISNFRFGENHAIMGLAFTWLMAMACAAPPLVGWSRYIPEGMQCSCGIDYYTRAEGFNNESFVIYMFVCHFLIPLMVVFFCYGRLLCAVKEAAAAQQESETTQRAEREVTRMVVIMVIAFLICWCPYAGVAWWIFTHQGSDFGPVFMTIPAFFAKSSSIYNPMIYICLNKQFRHCMITTLCCGKNPFEEEEGASTASKTEASSVSSSSVSPA.

Residues 1 to 36 (MNGTEGPYFYVPMVNTSGIVRSPYEYPQYYLVNPAA) lie on the Extracellular side of the membrane. 2 N-linked (GlcNAc...) asparagine glycosylation sites follow: asparagine 2 and asparagine 15. Residues 37 to 61 (YAALGAYMFLLILVGFPINFLTLYV) traverse the membrane as a helical segment. At 62–73 (TIEHKKLRTPLN) the chain is on the cytoplasmic side. Residues 74-96 (YILLNLAVADLFMVFGGFTTTMY) form a helical membrane-spanning segment. At 97 to 110 (TSMHGYFVLGRLGC) the chain is on the extracellular side. Cysteine 110 and cysteine 187 are disulfide-bonded. Residues 111–133 (NIEGFFATLGGEIALWSLVVLAI) traverse the membrane as a helical segment. The 'Ionic lock' involved in activated form stabilization signature appears at 134–136 (ERW). The Cytoplasmic portion of the chain corresponds to 134 to 152 (ERWVVVCKPISNFRFGENH). The helical transmembrane segment at 153–173 (AIMGLAFTWLMAMACAAPPLV) threads the bilayer. Residues 174–202 (GWSRYIPEGMQCSCGIDYYTRAEGFNNES) lie on the Extracellular side of the membrane. N-linked (GlcNAc...) asparagine glycosylation occurs at asparagine 200. A helical transmembrane segment spans residues 203-224 (FVIYMFVCHFLIPLMVVFFCYG). Topologically, residues 225–252 (RLLCAVKEAAAAQQESETTQRAEREVTR) are cytoplasmic. The chain crosses the membrane as a helical span at residues 253–274 (MVVIMVIAFLICWCPYAGVAWW). The Extracellular portion of the chain corresponds to 275-286 (IFTHQGSDFGPV). A helical transmembrane segment spans residues 287-308 (FMTIPAFFAKSSSIYNPMIYIC). N6-(retinylidene)lysine is present on lysine 296. Residues 309 to 353 (LNKQFRHCMITTLCCGKNPFEEEEGASTASKTEASSVSSSSVSPA) are Cytoplasmic-facing. S-palmitoyl cysteine attachment occurs at residues cysteine 322 and cysteine 323. A disordered region spans residues 331–353 (EEGASTASKTEASSVSSSSVSPA). A compositionally biased stretch (low complexity) spans 334–353 (ASTASKTEASSVSSSSVSPA).

The protein belongs to the G-protein coupled receptor 1 family. Opsin subfamily. Phosphorylated on some or all of the serine and threonine residues present in the C-terminal region. Post-translationally, contains one covalently linked retinal chromophore.

It localises to the membrane. The protein localises to the cell projection. The protein resides in the cilium. It is found in the photoreceptor outer segment. Its function is as follows. Photoreceptor required for image-forming vision at low light intensity. While most salt water fish species use retinal as chromophore, most freshwater fish use 3-dehydroretinal, or a mixture of retinal and 3-dehydroretinal. Light-induced isomerization of 11-cis to all-trans retinal triggers a conformational change that activates signaling via G-proteins. Subsequent receptor phosphorylation mediates displacement of the bound G-protein alpha subunit by arrestin and terminates signaling. In Lithognathus mormyrus (Striped seabream), this protein is Rhodopsin (rho).